A 171-amino-acid polypeptide reads, in one-letter code: ATP synthase subunit b (171 aa).

A helical transmembrane segment spans residues 19 to 39 (VGVGLILFIAIVIWAKAPAMI).

This sequence belongs to the ATPase B chain family. In terms of assembly, F-type ATPases have 2 components, F(1) - the catalytic core - and F(0) - the membrane proton channel. F(1) has five subunits: alpha(3), beta(3), gamma(1), delta(1), epsilon(1). F(0) has three main subunits: a(1), b(2) and c(10-14). The alpha and beta chains form an alternating ring which encloses part of the gamma chain. F(1) is attached to F(0) by a central stalk formed by the gamma and epsilon chains, while a peripheral stalk is formed by the delta and b chains.

It localises to the cell inner membrane. Functionally, f(1)F(0) ATP synthase produces ATP from ADP in the presence of a proton or sodium gradient. F-type ATPases consist of two structural domains, F(1) containing the extramembraneous catalytic core and F(0) containing the membrane proton channel, linked together by a central stalk and a peripheral stalk. During catalysis, ATP synthesis in the catalytic domain of F(1) is coupled via a rotary mechanism of the central stalk subunits to proton translocation. In terms of biological role, component of the F(0) channel, it forms part of the peripheral stalk, linking F(1) to F(0). The protein is ATP synthase subunit b of Caulobacter sp. (strain K31).